Consider the following 159-residue polypeptide: Phosphopantetheine adenylyltransferase (159 aa).

Residue Thr-9 coordinates substrate. Residues Thr-9–Phe-10 and His-17 each bind ATP. 3 residues coordinate substrate: Lys-41, Leu-73, and Arg-87. ATP-binding positions include Gly-88–Arg-90, Glu-98, and Tyr-123–Thr-129.

This sequence belongs to the bacterial CoaD family. In terms of assembly, homohexamer. Mg(2+) serves as cofactor.

Its subcellular location is the cytoplasm. It carries out the reaction (R)-4'-phosphopantetheine + ATP + H(+) = 3'-dephospho-CoA + diphosphate. Its pathway is cofactor biosynthesis; coenzyme A biosynthesis; CoA from (R)-pantothenate: step 4/5. Its function is as follows. Reversibly transfers an adenylyl group from ATP to 4'-phosphopantetheine, yielding dephospho-CoA (dPCoA) and pyrophosphate. This is Phosphopantetheine adenylyltransferase from Pseudomonas putida (strain GB-1).